Reading from the N-terminus, the 599-residue chain is Potassium-transporting ATPase potassium-binding subunit (599 aa).

Transmembrane regions (helical) follow at residues 8-28 (LLAL…IWLA), 61-81 (WQYA…VYAL), 133-153 (ALAV…FALF), 176-196 (AWLL…NGVI), 280-300 (LTNF…CFAF), 311-331 (WAVL…ITPA), 366-386 (INAS…AVIA), 391-411 (FTPL…VVFG), 416-436 (GLYG…LMIG), 456-476 (IAIL…VLAG), 521-541 (LLGL…LAIA), and 563-583 (LFVL…YVPA).

It belongs to the KdpA family. As to quaternary structure, the system is composed of three essential subunits: KdpA, KdpB and KdpC.

The protein localises to the cell inner membrane. In terms of biological role, part of the high-affinity ATP-driven potassium transport (or Kdp) system, which catalyzes the hydrolysis of ATP coupled with the electrogenic transport of potassium into the cytoplasm. This subunit binds the periplasmic potassium ions and delivers the ions to the membrane domain of KdpB through an intramembrane tunnel. This chain is Potassium-transporting ATPase potassium-binding subunit, found in Polaromonas naphthalenivorans (strain CJ2).